The primary structure comprises 502 residues: mRNA cap guanine-N(7) methyltransferase (502 aa).

The segment at 1–118 is disordered; it reads MADENPQAQG…SQQEEAMRFS (118 aa). Positions 93–115 are enriched in basic and acidic residues; it reads LVDRETLRRRQEERERSQQEEAM. The region spanning 146-502 is the mRNA cap 0 methyltransferase domain; that stretch reads SKIKGLRSFN…FYHAFCFYKV (357 aa). 155-156 contacts mRNA; sequence NN. S-adenosyl-L-methionine-binding positions include Lys159, Gly202, Asp226, Asp264, 307–309, and Tyr312; that span reads MFT. Basic and acidic residues predominate over residues 360-369; the sequence is ERETAAKKEE. The tract at residues 360–381 is disordered; that stretch reads ERETAAKKEEAEPEDGEVEEDD. Over residues 370–381 the composition is skewed to acidic residues; sequence AEPEDGEVEEDD.

Belongs to the class I-like SAM-binding methyltransferase superfamily. mRNA cap 0 methyltransferase family.

It localises to the nucleus. It carries out the reaction a 5'-end (5'-triphosphoguanosine)-ribonucleoside in mRNA + S-adenosyl-L-methionine = a 5'-end (N(7)-methyl 5'-triphosphoguanosine)-ribonucleoside in mRNA + S-adenosyl-L-homocysteine. Its function is as follows. Responsible for methylating the 5'-cap structure of mRNAs. This chain is mRNA cap guanine-N(7) methyltransferase (abd1), found in Aspergillus oryzae (strain ATCC 42149 / RIB 40) (Yellow koji mold).